A 197-amino-acid polypeptide reads, in one-letter code: Cold-regulated 413 plasma membrane protein 1 (197 aa).

Residues 1 to 40 are Extracellular-facing; sequence MPMKSLRNDHGTLKAMIGSDFNELTIAAKNLATHAFTLTG. Residues 41–61 traverse the membrane as a helical segment; it reads LGFGTSVLEWVASIAAIYLLV. Residues 62–71 are Cytoplasmic-facing; the sequence is LDRTNWKTNM. A helical membrane pass occupies residues 72-92; the sequence is LTSLLIPYIFFSLPSLIFGIF. At 93–94 the chain is on the extracellular side; sequence RG. A helical transmembrane segment spans residues 95-115; sequence EIGKWIAFVAVVVQLFFPKHA. Residues 116 to 117 are Cytoplasmic-facing; the sequence is RE. The chain crosses the membrane as a helical span at residues 118–138; that stretch reads YLELPVALVLLAVVAPNLIAG. The Extracellular segment spans residues 139-141; the sequence is TFR. Residues 142–162 traverse the membrane as a helical segment; the sequence is DSWIGLAICLGIGCYLLQEHI. Topologically, residues 163–176 are cytoplasmic; it reads RASGGFRNAFTKAN. Residues 177-197 form a helical membrane-spanning segment; it reads GISNTVGIICLVVFPVWALIF.

This sequence belongs to the Cold-regulated 413 protein family.

Its subcellular location is the membrane. In Arabidopsis thaliana (Mouse-ear cress), this protein is Cold-regulated 413 plasma membrane protein 1 (COR413PM1).